Reading from the N-terminus, the 43-residue chain is Photosystem II reaction center protein Psb30 (43 aa).

A helical membrane pass occupies residues 16-36 (IAQLTMLAMVLIAGPVVIVLL).

Belongs to the Psb30/Ycf12 family. In terms of assembly, PSII is composed of 1 copy each of membrane proteins PsbA, PsbB, PsbC, PsbD, PsbE, PsbF, PsbH, PsbI, PsbJ, PsbK, PsbL, PsbM, PsbT, PsbX, PsbY, PsbZ, Psb30/Ycf12, peripheral proteins PsbO, CyanoQ (PsbQ), PsbU, PsbV and a large number of cofactors. It forms dimeric complexes.

It is found in the cellular thylakoid membrane. In terms of biological role, a core subunit of photosystem II (PSII), probably helps stabilize the reaction center. The polypeptide is Photosystem II reaction center protein Psb30 (Trichodesmium erythraeum (strain IMS101)).